A 474-amino-acid chain; its full sequence is Citrate synthase, mitochondrial (474 aa).

A mitochondrion-targeting transit peptide spans 1-35 (MASTLRLSTSALRSSTLAGKPVVQSVAFNGLRCYS). Residues His310, His356, and Asp411 contribute to the active site.

Belongs to the citrate synthase family.

It is found in the mitochondrion matrix. The enzyme catalyses oxaloacetate + acetyl-CoA + H2O = citrate + CoA + H(+). It participates in carbohydrate metabolism; tricarboxylic acid cycle; isocitrate from oxaloacetate: step 1/2. This is Citrate synthase, mitochondrial (citA) from Emericella nidulans (strain FGSC A4 / ATCC 38163 / CBS 112.46 / NRRL 194 / M139) (Aspergillus nidulans).